We begin with the raw amino-acid sequence, 488 residues long: Catalase (488 aa).

The tract at residues 1–24 (MTDRRNLTTNQGVPIGDNQNSMTA) is disordered. The span at 7–23 (LTTNQGVPIGDNQNSMT) shows a compositional bias: polar residues. Active-site residues include His55 and Asn128. Heme is bound at residue Tyr338.

Belongs to the catalase family. It depends on heme as a cofactor.

Its subcellular location is the cytoplasm. The enzyme catalyses 2 H2O2 = O2 + 2 H2O. Functionally, decomposes hydrogen peroxide into water and oxygen; serves to protect cells from the toxic effects of hydrogen peroxide. The sequence is that of Catalase (kat) from Listeria seeligeri.